A 582-amino-acid chain; its full sequence is Cryptochrome DASH, chloroplastic/mitochondrial (582 aa).

A chloroplast and mitochondrion-targeting transit peptide spans 1 to 49 (MLHFLSSSSPLNPQFLLLPRQSARLRVLLSIPVSAMSSSSSSSSRGALA). A Photolyase/cryptochrome alpha/beta domain is found at 84-234 (GVAIVWFRND…KLQLIWGATL (151 aa)). The interval 560–582 (GHQKRDQQFNRQRRPGHMYRRQK) is disordered. Residues 570–582 (RQRRPGHMYRRQK) show a composition bias toward basic residues.

It belongs to the DNA photolyase class-1 family. It depends on FAD as a cofactor. (6R)-5,10-methylene-5,6,7,8-tetrahydrofolate serves as cofactor.

It localises to the plastid. It is found in the chloroplast. The protein resides in the mitochondrion. Functionally, may have a photoreceptor function. Binds ss- and ds-DNA in a sequence non-specific manner, lacks photolyase activity. This Oryza sativa subsp. japonica (Rice) protein is Cryptochrome DASH, chloroplastic/mitochondrial (CRYD).